Consider the following 158-residue polypeptide: S-ribosylhomocysteine lyase (158 aa).

Residues H54, H58, and C124 each coordinate Fe cation.

It belongs to the LuxS family. As to quaternary structure, homodimer. Requires Fe cation as cofactor.

The enzyme catalyses S-(5-deoxy-D-ribos-5-yl)-L-homocysteine = (S)-4,5-dihydroxypentane-2,3-dione + L-homocysteine. Involved in the synthesis of autoinducer 2 (AI-2) which is secreted by bacteria and is used to communicate both the cell density and the metabolic potential of the environment. The regulation of gene expression in response to changes in cell density is called quorum sensing. Catalyzes the transformation of S-ribosylhomocysteine (RHC) to homocysteine (HC) and 4,5-dihydroxy-2,3-pentadione (DPD). This chain is S-ribosylhomocysteine lyase, found in Lactobacillus johnsonii (strain CNCM I-12250 / La1 / NCC 533).